The sequence spans 179 residues: MIIYLHGFDSTSPGNHEKILQLQFIDDDVRFINYSTLHPKHDMQHLLKEVHKVIEQSDDPHPIICGVGLGGFWSERIGFLCGIKQVVFNPNLHPENNMVGRIDRPEEYEDIATKCVAQYRMKNKGRCLVVLSREDEIHDNTKTASALEDYYEVVWDEKESHKFKKISQHLQAMKAFKNA.

The protein belongs to the UPF0227 family.

In Vibrio atlanticus (strain LGP32) (Vibrio splendidus (strain Mel32)), this protein is UPF0227 protein VS_2073.